Reading from the N-terminus, the 131-residue chain is MSGGKGKAGSSEKASTSRSAKAGLTFPVGRVHRLLRKGNYAQRVGSGAPVYLTSVLEYLAAEILELAGNAARDNKKSRIIPRHLQLAIRNDEELNKLLGHVTIAQGGVLPNIHQSLLPAKKAKAGNASQEL.

The segment at 1–22 (MSGGKGKAGSSEKASTSRSAKA) is disordered. Residue Ser-2 is modified to N-acetylserine. N6-acetyllysine is present on residues Lys-5 and Lys-7. N5-methylglutamine is present on Gln-105. Residue Ser-128 is modified to Phosphoserine. The short motif at 128-129 (SQ) is the [ST]-Q motif element.

Belongs to the histone H2A family. As to quaternary structure, the nucleosome is a histone octamer containing two molecules each of H2A, H2B, H3 and H4 assembled in one H3-H4 heterotetramer and two H2A-H2B heterodimers. The octamer wraps approximately 147 bp of DNA. Post-translationally, phosphorylated to form H2AS128ph (gamma-H2A) in response to DNA double-strand breaks (DSBs) generated by exogenous genotoxic agents and by stalled replication forks. Phosphorylation is dependent on the DNA damage checkpoint kinases MEC1/ATR and TEL1/ATM, spreads on either side of a detected DSB site and may mark the surrounding chromatin for recruitment of proteins required for DNA damage signaling and repair. Gamma-H2A is removed from the DNA prior to the strand invasion-primer extension step of the repair process and subsequently dephosphorylated. Dephosphorylation is necessary for efficient recovery from the DNA damage checkpoint. In terms of processing, acetylated by ESA1 to form H2AK4ac and H2AK7ac.

It is found in the nucleus. The protein localises to the chromosome. Its function is as follows. Core component of nucleosome which plays a central role in DNA double strand break (DSB) repair. Nucleosomes wrap and compact DNA into chromatin, limiting DNA accessibility to the cellular machineries which require DNA as a template. Histones thereby play a central role in transcription regulation, DNA repair, DNA replication and chromosomal stability. DNA accessibility is regulated via a complex set of post-translational modifications of histones, also called histone code, and nucleosome remodeling. The protein is Histone H2A.2 (HTA2) of Debaryomyces hansenii (strain ATCC 36239 / CBS 767 / BCRC 21394 / JCM 1990 / NBRC 0083 / IGC 2968) (Yeast).